A 513-amino-acid chain; its full sequence is Transcription factor SOX-9 (513 aa).

Disordered regions lie at residues 1-67 and 160-273; these read MNLL…SEED and RLRV…FRDV. Positions 30-41 are enriched in low complexity; that stretch reads SAGSPCPSGSGS. A compositionally biased stretch (polar residues) spans 42 to 52; sequence DTENTRPQENT. 2 stretches are compositionally biased toward basic and acidic residues: residues 56–67 and 160–174; these read GEPDLKKESEED and RLRV…DYKY. Positions 63-103 are dimerization (DIM); that stretch reads ESEEDKFPVCIREAVSQVLKGYDWTLVPMPVRVNGSSKNKP. Residues 63-103 form a PQA region; the sequence is ESEEDKFPVCIREAVSQVLKGYDWTLVPMPVRVNGSSKNKP. S64 carries the phosphoserine modification. The HMG box DNA-binding region spans 105-173; the sequence is VKRPMNAFMV…QHKKDHPDYK (69 aa). S211 is modified (phosphoserine). The tract at residues 224–307 is transactivation domain (TAM); sequence PGKHSGQSQG…LPPNGHPGVP (84 aa). 2 short sequence motifs (9aaTAD) span residues 275 to 284 and 290 to 298; these read IGELSSDVIS and DVNEFDQYL. Residues 334–447 are disordered; it reads VWMSKQQAPP…PITRSQYDYT (114 aa). Residues 341 to 380 are compositionally biased toward pro residues; sequence APPPPPPPPQQSPQAPPQPPQAPPQAPQAPPQPQPAPPQP. Residues 387 to 423 show a composition bias toward polar residues; sequence TPLSSEPGQAQRTHIKTEQLSPSHYSEQQQHSPQQIA. Residues 398–513 form a transactivation domain (TAC) region; it reads RTHIKTEQLS…QPVYTQLTRP (116 aa). Residue K402 forms a Glycyl lysine isopeptide (Lys-Gly) (interchain with G-Cter in ubiquitin) linkage. Positions 464-472 match the 9aaTAD 3 motif; the sequence is SSLYSTFTY. Residues 483 to 513 are disordered; it reads PIADTSGVPSIPQTHSPQHWEQPVYTQLTRP. Over residues 489-513 the composition is skewed to polar residues; it reads GVPSIPQTHSPQHWEQPVYTQLTRP.

Homodimer; homodimerization is required for activity. Interacts (via C-terminus) with ZNF219; forming a complex that binds to the COL2A1 promoter and activates COL2A1 expression. Interacts with DDRGK1. Interacts with EP300/p300. Interacts with beta-catenin (CTNNB1); inhibiting CTNNB1 activity by competing with the binding sites of TCF/LEF within CTNNB1. Acetylated; acetylation impairs nuclear localization and ability to transactivate expression of target genes. Deacetylated by SIRT1. Post-translationally, phosphorylation at Ser-64 and Ser-211 by PKA increases transcriptional activity and may help delay chondrocyte maturation downstream of PTHLH/PTHrP signaling. Phosphorylation at either Ser-64 or Ser-211 is required for sumoylation, but phosphorylation is not dependent on sumoylation. Phosphorylated on tyrosine residues; tyrosine dephosphorylation by PTPN11/SHP2 blocks SOX9 phosphorylation by PKA and subsequent SUMOylation. In terms of processing, sumoylated; phosphorylation at either Ser-64 or Ser-211 is required for sumoylation. Sumoylation is induced by BMP signaling pathway. Ubiquitinated; ubiquitination leads to proteasomal degradation and is negatively regulated by DDRGK1.

It is found in the nucleus. In terms of biological role, transcription factor that plays a key role in chondrocytes differentiation and skeletal development. Specifically binds the 5'-ACAAAG-3' DNA motif present in enhancers and super-enhancers and promotes expression of genes important for chondrogenesis, including cartilage matrix protein-coding genes COL2A1, COL4A2, COL9A1, COL11A2 and ACAN, SOX5 and SOX6. Also binds to some promoter regions. Plays a central role in successive steps of chondrocyte differentiation. Absolutely required for precartilaginous condensation, the first step in chondrogenesis during which skeletal progenitors differentiate into prechondrocytes. Together with SOX5 and SOX6, required for overt chondrogenesis when condensed prechondrocytes differentiate into early stage chondrocytes, the second step in chondrogenesis. Later, required to direct hypertrophic maturation and block osteoblast differentiation of growth plate chondrocytes: maintains chondrocyte columnar proliferation, delays prehypertrophy and then prevents osteoblastic differentiation of chondrocytes by lowering beta-catenin (CTNNB1) signaling and RUNX2 expression. Also required for chondrocyte hypertrophy, both indirectly, by keeping the lineage fate of chondrocytes, and directly, by remaining present in upper hypertrophic cells and transactivating COL10A1 along with MEF2C. Low lipid levels are the main nutritional determinant for chondrogenic commitment of skeletal progenitor cells: when lipids levels are low, FOXO (FOXO1 and FOXO3) transcription factors promote expression of SOX9, which induces chondrogenic commitment and suppresses fatty acid oxidation. Mechanistically, helps, but is not required, to remove epigenetic signatures of transcriptional repression and deposit active promoter and enhancer marks at chondrocyte-specific genes. Acts in cooperation with the Hedgehog pathway-dependent GLI (GLI1 and GLI3) transcription factors. In addition to cartilage development, also acts as a regulator of proliferation and differentiation in epithelial stem/progenitor cells: involved in the lung epithelium during branching morphogenesis, by balancing proliferation and differentiation and regulating the extracellular matrix. Controls epithelial branching during kidney development. This is Transcription factor SOX-9 (SOX9) from Canis lupus familiaris (Dog).